We begin with the raw amino-acid sequence, 241 residues long: Probable transcriptional regulatory protein SAR11_0592 (241 aa).

Residues Met1–Val24 are disordered.

Belongs to the TACO1 family.

The protein resides in the cytoplasm. This chain is Probable transcriptional regulatory protein SAR11_0592, found in Pelagibacter ubique (strain HTCC1062).